Here is a 406-residue protein sequence, read N- to C-terminus: Succinylornithine transaminase (406 aa).

At lysine 252 the chain carries N6-(pyridoxal phosphate)lysine.

The protein belongs to the class-III pyridoxal-phosphate-dependent aminotransferase family. AstC subfamily. It depends on pyridoxal 5'-phosphate as a cofactor.

It catalyses the reaction N(2)-succinyl-L-ornithine + 2-oxoglutarate = N-succinyl-L-glutamate 5-semialdehyde + L-glutamate. It participates in amino-acid degradation; L-arginine degradation via AST pathway; L-glutamate and succinate from L-arginine: step 3/5. In terms of biological role, catalyzes the transamination of N(2)-succinylornithine and alpha-ketoglutarate into N(2)-succinylglutamate semialdehyde and glutamate. Can also act as an acetylornithine aminotransferase. The polypeptide is Succinylornithine transaminase (Shigella boydii serotype 18 (strain CDC 3083-94 / BS512)).